Consider the following 286-residue polypeptide: 4-hydroxybenzoate octaprenyltransferase (286 aa).

Helical transmembrane passes span glycine 21–methionine 40, isoleucine 95–valine 115, phenylalanine 142–valine 162, tryptophan 167–valine 187, glutamine 210–alanine 230, leucine 235–phenylalanine 255, and phenylalanine 266–isoleucine 286.

Belongs to the UbiA prenyltransferase family. It depends on Mg(2+) as a cofactor.

The protein resides in the cell inner membrane. The catalysed reaction is all-trans-octaprenyl diphosphate + 4-hydroxybenzoate = 4-hydroxy-3-(all-trans-octaprenyl)benzoate + diphosphate. The protein operates within cofactor biosynthesis; ubiquinone biosynthesis. Catalyzes the prenylation of para-hydroxybenzoate (PHB) with an all-trans polyprenyl group. Mediates the second step in the final reaction sequence of ubiquinone-8 (UQ-8) biosynthesis, which is the condensation of the polyisoprenoid side chain with PHB, generating the first membrane-bound Q intermediate 3-octaprenyl-4-hydroxybenzoate. The polypeptide is 4-hydroxybenzoate octaprenyltransferase (Shewanella baltica (strain OS185)).